Consider the following 238-residue polypeptide: MSSNLANKLRVGTKKAHTMAENVGFVKCFLKGVVEKSSYRKLVANFYYVYSAMEEEMEKHSQHPIVSKINFSQLNRKQTLEQDLSYYYGANWREQIQLSPAGEAYVQRIREISATEPELLIAHSYTRYLGDLSGGQILKNIAVTAMNLNDGQGTAFYEFADISDEKAFKAKYRQTLDELAIDEATGDRIVDEANAAFGMNMKMFQELEGNLIKAIGMMLFNTLTRKRTRGATELATAE.

The protein belongs to the heme oxygenase family.

The enzyme catalyses heme b + 3 reduced [NADPH--hemoprotein reductase] + 3 O2 = biliverdin IXalpha + CO + Fe(2+) + 3 oxidized [NADPH--hemoprotein reductase] + 3 H2O + H(+). Its function is as follows. Catalyzes the opening of the heme ring with the release of iron. Key enzyme in the synthesis of the chromophoric part of the photosynthetic antennae. Upon overexpression in E.coli with PCB:ferredoxin oxidoreductase, CpeS and either CpcB or PecB permits synthesis of phycocyanin-coupled CpcB or PecB. The protein is Heme oxygenase 1 (pbsA1) of Nostoc sp. (strain PCC 7120 / SAG 25.82 / UTEX 2576).